A 409-amino-acid polypeptide reads, in one-letter code: Isovaleryl-CoA dehydrogenase, mitochondrial (409 aa).

A mitochondrion-targeting transit peptide spans 1 to 22 (MQRFFSARSILGYAVKTRRRSF). FAD-binding positions include 151-160 (LAMSEPNAGS) and 184-186 (WCT). Ser160 is a substrate binding site. Substrate-binding positions include 206–207 (SK), Tyr261, and 268–271 (DLER). The active-site Proton acceptor is Glu270. FAD contacts are provided by residues Arg296, Gln307, and 364 to 368 (QCLGG). 391-392 (AG) contacts substrate. 393–395 (TSE) serves as a coordination point for FAD.

The protein belongs to the acyl-CoA dehydrogenase family. Homodimer. FAD serves as cofactor. In terms of tissue distribution, expressed in leaves, stems and flowers. Not detected in roots.

The protein localises to the mitochondrion. It carries out the reaction 3-methylbutanoyl-CoA + oxidized [electron-transfer flavoprotein] + H(+) = 3-methylbut-2-enoyl-CoA + reduced [electron-transfer flavoprotein]. It functions in the pathway amino-acid degradation; L-leucine degradation; (S)-3-hydroxy-3-methylglutaryl-CoA from 3-isovaleryl-CoA: step 1/3. Its function is as follows. Involved in degradation of the branched-chain amino acids, phytol and lysine for the supply of carbon and electrons to the ETF/ETFQO complex during dark-induced sugar starvation. The polypeptide is Isovaleryl-CoA dehydrogenase, mitochondrial (IVD) (Arabidopsis thaliana (Mouse-ear cress)).